Reading from the N-terminus, the 150-residue chain is Avidin-related protein 3 (150 aa).

The N-terminal stretch at 1–24 is a signal peptide; the sequence is MVHTTSPLLLLLLLSLALVAPSLS. Residues 26–147 form the Avidin-like domain; the sequence is RKCSLTGKWT…GYNNFTRQRT (122 aa). Cysteines 28 and 105 form a disulfide. Residues Asn36, Ser40, Tyr57, Thr59, and Asp63 each contribute to the biotin site. N-linked (GlcNAc...) asparagine glycosylation occurs at Asn93. Biotin-binding residues include Ser95, Ser99, and Asn140. An N-linked (GlcNAc...) asparagine glycan is attached at Asn141.

This sequence belongs to the avidin/streptavidin family. Homotetramer. In terms of processing, glycosylated.

The protein resides in the secreted. Forms a strong non-covalent specific complex with biotin. The protein is Avidin-related protein 3 (AVR3) of Gallus gallus (Chicken).